We begin with the raw amino-acid sequence, 149 residues long: MAKKITGYVKLQVPAGSANPAPPIGPALGQRGLNIMEFCKAFNAQTAQLEKGMPIPVVITAYQDRSFTFELKTPPVSYFLKKAAGLDTKKKPGSGSKTPGKGATVGKVTRAQLAEIAEKKMKDLNCDNVASAVQMLEGSARSMGLQVEG.

This sequence belongs to the universal ribosomal protein uL11 family. Part of the ribosomal stalk of the 50S ribosomal subunit. Interacts with L10 and the large rRNA to form the base of the stalk. L10 forms an elongated spine to which L12 dimers bind in a sequential fashion forming a multimeric L10(L12)X complex. One or more lysine residues are methylated.

Forms part of the ribosomal stalk which helps the ribosome interact with GTP-bound translation factors. In Azorhizobium caulinodans (strain ATCC 43989 / DSM 5975 / JCM 20966 / LMG 6465 / NBRC 14845 / NCIMB 13405 / ORS 571), this protein is Large ribosomal subunit protein uL11.